A 266-amino-acid polypeptide reads, in one-letter code: MSSVFGKPRAGSGPQSAPLEVNLAILGRRGAGKSALTVKFLTKRFISEYDPNLEDTYSSEETVDHQPVHLRVMDTADLDTPRNCERYLNWAHAFLVVYSVDSRQSFDSSSSYLELLALHAKETQRSIPALLLGNKLDMAQYRQVTKAEGVALAGRFGCLFFEVSACLDFEHVQHVFHEAVREARRELEKSPLTRPLFISEERALPHQAPLTARHGLASCTFNTLSTINLKEMPTVAQAKLVTVKSSRAQSKRKAPTLTLLKGFKIF.

GTP is bound by residues G27 to S34, D74 to L78, and N134 to D137.

This sequence belongs to the small GTPase superfamily. Ras family.

The enzyme catalyses GTP + H2O = GDP + phosphate + H(+). This chain is Ras-like protein family member 12 (RASL12), found in Homo sapiens (Human).